A 462-amino-acid chain; its full sequence is Argininosuccinate lyase (462 aa).

Belongs to the lyase 1 family. Argininosuccinate lyase subfamily.

Its subcellular location is the cytoplasm. It catalyses the reaction 2-(N(omega)-L-arginino)succinate = fumarate + L-arginine. It participates in amino-acid biosynthesis; L-arginine biosynthesis; L-arginine from L-ornithine and carbamoyl phosphate: step 3/3. The polypeptide is Argininosuccinate lyase (Prochlorococcus marinus (strain MIT 9211)).